Consider the following 149-residue polypeptide: Large ribosomal subunit protein bL9 (149 aa).

This sequence belongs to the bacterial ribosomal protein bL9 family.

Binds to the 23S rRNA. This Magnetococcus marinus (strain ATCC BAA-1437 / JCM 17883 / MC-1) protein is Large ribosomal subunit protein bL9.